Reading from the N-terminus, the 174-residue chain is uncharacterized protein (174 aa).

Residues 42-174 (SNTKNINLYE…GVKGMFWYPR (133 aa)) form the N-acetyltransferase domain.

The protein belongs to the acetyltransferase family. Ycf52 subfamily.

The protein localises to the plastid. The protein resides in the chloroplast. This is an uncharacterized protein from Porphyra purpurea (Red seaweed).